The chain runs to 874 residues: Alanine--tRNA ligase (874 aa).

Zn(2+) is bound by residues His-563, His-567, Cys-665, and His-669.

Belongs to the class-II aminoacyl-tRNA synthetase family. Zn(2+) is required as a cofactor.

It is found in the cytoplasm. The enzyme catalyses tRNA(Ala) + L-alanine + ATP = L-alanyl-tRNA(Ala) + AMP + diphosphate. Catalyzes the attachment of alanine to tRNA(Ala) in a two-step reaction: alanine is first activated by ATP to form Ala-AMP and then transferred to the acceptor end of tRNA(Ala). Also edits incorrectly charged Ser-tRNA(Ala) and Gly-tRNA(Ala) via its editing domain. In Haemophilus ducreyi (strain 35000HP / ATCC 700724), this protein is Alanine--tRNA ligase.